A 389-amino-acid chain; its full sequence is (S)-8-oxocitronellyl enol synthase CYC1 (389 aa).

Residues 34-36 (TGI), 62-63 (RR), 80-81 (DV), 104-105 (AW), and Q138 contribute to the NADP(+) site. Residues K142 and Y174 contribute to the active site. Residues K142 and Y174 each coordinate substrate. Residues Y174, V201, and 208–210 (SMM) contribute to the NADP(+) site. S350 serves as a coordination point for substrate.

The protein belongs to the short-chain dehydrogenases/reductases (SDR) family. Highly divergent.

The enzyme catalyses (S)-8-oxocitronellyl enol + NADP(+) = (6E)-8-oxogeranial + NADPH + H(+). The catalysed reaction is (S)-8-oxocitronellyl enol + NAD(+) = (6E)-8-oxogeranial + NADH + H(+). In terms of biological role, iridoid synthase that catalyzes the first step in generation of the iridoid ring scaffold using the linear monoterpene (6E)-8-oxogeranial as substrate. Iridoids comprise a large family of distinctive bicyclic monoterpenes that possess a wide range of pharmacological activities, including anticancer, anti-inflammatory, antifungal and antibacterial activities. The chain is (S)-8-oxocitronellyl enol synthase CYC1 from Camptotheca acuminata (Happy tree).